The chain runs to 74 residues: U6-agatoxin-Ao1a (74 aa).

The first 19 residues, 1-19, serve as a signal peptide directing secretion; sequence MRFYIAFFFLLLAADMALS. Positions 20–30 are excised as a propeptide; it reads FEIGNSEELER. 3 cysteine pairs are disulfide-bonded: C44/C56, C49/C61, and C55/C72.

As to expression, expressed by the venom gland.

It localises to the secreted. The protein is U6-agatoxin-Ao1a of Agelena orientalis (Funnel-web spider).